Consider the following 382-residue polypeptide: Sphingosine 1-phosphate receptor 1 (382 aa).

Val-2 carries the post-translational modification N-acetylvaline. Residues 2–46 lie on the Extracellular side of the membrane; that stretch reads VSTSIPEVKALRSSVSDYGNYDIIVRHYNYTGKLNIGAEKDHGIK. N6-acetyllysine is present on Lys-10. N-linked (GlcNAc...) asparagine glycosylation is present at Asn-30. Residues 47–68 traverse the membrane as a helical segment; sequence LTSVVFILICCFIILENIFVLL. The Cytoplasmic portion of the chain corresponds to 69–82; that stretch reads TIWKTKKFHRPMYY. Residues 83–104 traverse the membrane as a helical segment; it reads FIGNLALSDLLAGVAYTANLLL. The Extracellular segment spans residues 105 to 116; the sequence is SGATTYKLTPAQ. Residues 117–138 form a helical membrane-spanning segment; the sequence is WFLREGSMFVALSASVFSLLAI. Residue 120 to 121 coordinates sphing-4-enine 1-phosphate; that stretch reads RE. At 139–160 the chain is on the cytoplasmic side; sequence AIERYITMLKMKLHNGSNSSRS. The chain crosses the membrane as a helical span at residues 161–182; the sequence is FLLISACWVISLILGGLPIMGW. Residues 183 to 196 lie on the Extracellular side of the membrane; the sequence is NCISSLSSCSTVLP. A disulfide bridge links Cys-184 with Cys-191. A helical membrane pass occupies residues 197–224; that stretch reads LYHKHYILFCTTVFTLLLLSIVILYCRI. Residues 225–257 lie on the Cytoplasmic side of the membrane; sequence YSLVRTRSRRLTFRKNISKASRSSEKSLALLKT. Phosphothreonine is present on Thr-236. Residues 258–278 form a helical membrane-spanning segment; the sequence is VIIVLSVFIACWAPLFILLLL. 265–269 is a sphing-4-enine 1-phosphate binding site; sequence FIACW. Residues 279-289 are Extracellular-facing; it reads DVGCKAKTCDI. A disulfide bond links Cys-282 and Cys-287. A helical membrane pass occupies residues 290–310; it reads LYKAEYFLVLAVLNSGTNPII. Over 311-382 the chain is Cytoplasmic; it reads YTLTNKEMRR…MSSGNVNSSS (72 aa). Cys-328 is lipidated: S-palmitoyl cysteine. Positions 348–382 are disordered; the sequence is MEFSRSKSDNSSHPQKDDGDNPETIMSSGNVNSSS. A phosphoserine mark is found at Ser-351 and Ser-353. Positions 351–366 are enriched in basic and acidic residues; sequence SRSKSDNSSHPQKDDG. Polar residues predominate over residues 371 to 382; the sequence is TIMSSGNVNSSS.

The protein belongs to the G-protein coupled receptor 1 family. In terms of assembly, interacts with GNAI1 and GNAI3. Interacts with CD69; this interaction promotes S1PR1 degradation. In terms of processing, palmitoylated by ZDHHC5. Palmitoylation is required for targeting to plasma membrane, enabling G(i) coupling. As to expression, expressed in a wide variety of tissues with highest levels in brain, heart and spleen. Lower levels found in kidney, liver, lung, muscle, placenta, thymus, and uterus. Very low levels in intestine, stomach and testis. According to PubMed:9931453, expressed modestly in apparent endothelial cells surrounding some blood vessels (e.g. aortic trunk).

It localises to the cell membrane. The protein resides in the endosome. Its subcellular location is the membrane raft. Functionally, G-protein coupled receptor for the bioactive lysosphingolipid sphingosine 1-phosphate (S1P) that seems to be coupled to the G(i) subclass of heteromeric G proteins. Signaling leads to the activation of RAC1, SRC, PTK2/FAK1 and MAP kinases. Plays an important role in cell migration, probably via its role in the reorganization of the actin cytoskeleton and the formation of lamellipodia in response to stimuli that increase the activity of the sphingosine kinase SPHK1. Required for normal chemotaxis toward sphingosine 1-phosphate. Required for normal embryonic heart development and normal cardiac morphogenesis. Plays an important role in the regulation of sprouting angiogenesis and vascular maturation. Inhibits sprouting angiogenesis to prevent excessive sprouting during blood vessel development. Required for normal egress of mature T-cells from the thymus into the blood stream and into peripheral lymphoid organs. Plays a role in the migration of osteoclast precursor cells, the regulation of bone mineralization and bone homeostasis. Plays a role in responses to oxidized 1-palmitoyl-2-arachidonoyl-sn-glycero-3-phosphocholine by pulmonary endothelial cells and in the protection against ventilator-induced lung injury. This is Sphingosine 1-phosphate receptor 1 from Mus musculus (Mouse).